The primary structure comprises 78 residues: WAP four-disulfide core domain protein 12 (78 aa).

An N-terminal signal peptide occupies residues 1–21; that stretch reads MWPNSILVLTVLLISSTLVTG. The region spanning 25-72 is the WAP domain; it reads KGAEKGVCPPDNVRCIRGEDPQCHNDNDCKDQKICCYWHCGFKCVQPV. 4 disulfides stabilise this stretch: cysteine 32-cysteine 60, cysteine 39-cysteine 64, cysteine 47-cysteine 59, and cysteine 53-cysteine 68.

The protein resides in the secreted. Antibacterial protein. Putative acid-stable proteinase inhibitor. The polypeptide is WAP four-disulfide core domain protein 12 (Rattus norvegicus (Rat)).